Consider the following 299-residue polypeptide: MATH domain and coiled-coil domain-containing protein At2g42460 (299 aa).

Residues 7-130 (QKTFTWKIEN…NNTLFIEVYI (124 aa)) enclose the MATH domain. Residues 225–262 (FRVKWLKSKLDEISLARKKKVDADAARVQELEGKVKNQ) are a coiled coil.

The chain is MATH domain and coiled-coil domain-containing protein At2g42460 from Arabidopsis thaliana (Mouse-ear cress).